The chain runs to 205 residues: Probable nicotinate-nucleotide adenylyltransferase (205 aa).

The protein belongs to the NadD family.

It catalyses the reaction nicotinate beta-D-ribonucleotide + ATP + H(+) = deamido-NAD(+) + diphosphate. Its pathway is cofactor biosynthesis; NAD(+) biosynthesis; deamido-NAD(+) from nicotinate D-ribonucleotide: step 1/1. Its function is as follows. Catalyzes the reversible adenylation of nicotinate mononucleotide (NaMN) to nicotinic acid adenine dinucleotide (NaAD). The chain is Probable nicotinate-nucleotide adenylyltransferase from Nocardioides sp. (strain ATCC BAA-499 / JS614).